The sequence spans 396 residues: Mannonate dehydratase (396 aa).

It belongs to the mannonate dehydratase family. It depends on Fe(2+) as a cofactor. Mn(2+) serves as cofactor.

The catalysed reaction is D-mannonate = 2-dehydro-3-deoxy-D-gluconate + H2O. The protein operates within carbohydrate metabolism; pentose and glucuronate interconversion. Its function is as follows. Catalyzes the dehydration of D-mannonate. The sequence is that of Mannonate dehydratase from Enterobacter sp. (strain 638).